An 856-amino-acid chain; its full sequence is DNA mismatch repair protein MutS (856 aa).

623-630 (GPNMSGKS) serves as a coordination point for ATP.

The protein belongs to the DNA mismatch repair MutS family.

Functionally, this protein is involved in the repair of mismatches in DNA. It is possible that it carries out the mismatch recognition step. This protein has a weak ATPase activity. This chain is DNA mismatch repair protein MutS, found in Natronomonas pharaonis (strain ATCC 35678 / DSM 2160 / CIP 103997 / JCM 8858 / NBRC 14720 / NCIMB 2260 / Gabara) (Halobacterium pharaonis).